Consider the following 200-residue polypeptide: Mpv17-like protein 2 (200 aa).

The next 3 membrane-spanning stretches (helical) occupy residues Ala-24–Gly-40, Ala-63–Leu-83, and Val-102–Gly-122.

This sequence belongs to the peroxisomal membrane protein PXMP2/4 family. Interacts with the large mitochondrial ribosomal subunit.

It localises to the membrane. The protein localises to the mitochondrion inner membrane. Required for the assembly and stability of the mitochondrial ribosome. Is a positive regulator of mitochondrial protein synthesis. This Mus musculus (Mouse) protein is Mpv17-like protein 2 (Mpv17l2).